Reading from the N-terminus, the 234-residue chain is Orotidine 5'-phosphate decarboxylase (234 aa).

Residues D11, K33, 60-69, T120, R181, Q190, G210, and R211 contribute to the substrate site; that span reads DLKFHDIPNT. K62 serves as the catalytic Proton donor.

The protein belongs to the OMP decarboxylase family. Type 1 subfamily. Homodimer.

The catalysed reaction is orotidine 5'-phosphate + H(+) = UMP + CO2. The protein operates within pyrimidine metabolism; UMP biosynthesis via de novo pathway; UMP from orotate: step 2/2. Its function is as follows. Catalyzes the decarboxylation of orotidine 5'-monophosphate (OMP) to uridine 5'-monophosphate (UMP). The protein is Orotidine 5'-phosphate decarboxylase of Aliivibrio fischeri (strain ATCC 700601 / ES114) (Vibrio fischeri).